A 1392-amino-acid polypeptide reads, in one-letter code: DNA-directed RNA polymerase subunit beta (1392 aa).

This sequence belongs to the RNA polymerase beta chain family. The RNAP catalytic core consists of 2 alpha, 1 beta, 1 beta' and 1 omega subunit. When a sigma factor is associated with the core the holoenzyme is formed, which can initiate transcription.

It catalyses the reaction RNA(n) + a ribonucleoside 5'-triphosphate = RNA(n+1) + diphosphate. Its function is as follows. DNA-dependent RNA polymerase catalyzes the transcription of DNA into RNA using the four ribonucleoside triphosphates as substrates. This chain is DNA-directed RNA polymerase subunit beta, found in Neisseria gonorrhoeae (strain ATCC 700825 / FA 1090).